Here is a 306-residue protein sequence, read N- to C-terminus: Methionyl-tRNA formyltransferase (306 aa).

110–113 (SLLP) lines the (6S)-5,6,7,8-tetrahydrofolate pocket.

Belongs to the Fmt family.

It catalyses the reaction L-methionyl-tRNA(fMet) + (6R)-10-formyltetrahydrofolate = N-formyl-L-methionyl-tRNA(fMet) + (6S)-5,6,7,8-tetrahydrofolate + H(+). In terms of biological role, attaches a formyl group to the free amino group of methionyl-tRNA(fMet). The formyl group appears to play a dual role in the initiator identity of N-formylmethionyl-tRNA by promoting its recognition by IF2 and preventing the misappropriation of this tRNA by the elongation apparatus. In Brucella suis (strain ATCC 23445 / NCTC 10510), this protein is Methionyl-tRNA formyltransferase.